The sequence spans 508 residues: Photosystem II CP47 reaction center protein (508 aa).

A run of 6 helical transmembrane segments spans residues 21 to 36 (SVHI…WAGS), 101 to 115 (IVFS…IWHW), 140 to 156 (GIHL…FGAF), 203 to 218 (IAAG…FHLS), 237 to 252 (VLSS…AFVV), and 457 to 472 (SFAL…HGAR).

It belongs to the PsbB/PsbC family. PsbB subfamily. In terms of assembly, PSII is composed of 1 copy each of membrane proteins PsbA, PsbB, PsbC, PsbD, PsbE, PsbF, PsbH, PsbI, PsbJ, PsbK, PsbL, PsbM, PsbT, PsbX, PsbY, PsbZ, Psb30/Ycf12, at least 3 peripheral proteins of the oxygen-evolving complex and a large number of cofactors. It forms dimeric complexes. The cofactor is Binds multiple chlorophylls. PSII binds additional chlorophylls, carotenoids and specific lipids..

It localises to the plastid. The protein localises to the chloroplast thylakoid membrane. One of the components of the core complex of photosystem II (PSII). It binds chlorophyll and helps catalyze the primary light-induced photochemical processes of PSII. PSII is a light-driven water:plastoquinone oxidoreductase, using light energy to abstract electrons from H(2)O, generating O(2) and a proton gradient subsequently used for ATP formation. In Morus indica (Mulberry), this protein is Photosystem II CP47 reaction center protein.